A 170-amino-acid polypeptide reads, in one-letter code: Ribosome maturation factor RimM (170 aa).

The PRC barrel domain occupies 97–170 (HPDEYYWVDL…RIVVDWDPEF (74 aa)).

It belongs to the RimM family. Binds ribosomal protein uS19.

It is found in the cytoplasm. In terms of biological role, an accessory protein needed during the final step in the assembly of 30S ribosomal subunit, possibly for assembly of the head region. Essential for efficient processing of 16S rRNA. May be needed both before and after RbfA during the maturation of 16S rRNA. It has affinity for free ribosomal 30S subunits but not for 70S ribosomes. This chain is Ribosome maturation factor RimM, found in Xylella fastidiosa (strain M23).